The primary structure comprises 555 residues: Glutamine--tRNA ligase (555 aa).

The 'HIGH' region signature appears at 34-44 (PEPNGYLHIGH). ATP contacts are provided by residues 35–37 (EPN) and 41–47 (HIGHAKS). L-glutamine contacts are provided by Asp67 and Tyr212. Residues Thr231, 261-262 (RL), and 269-271 (MSK) each bind ATP. A 'KMSKS' region motif is present at residues 268 to 272 (VMSKR). An interaction with tRNA region spans residues 317–324 (TKQDNTIE).

The protein belongs to the class-I aminoacyl-tRNA synthetase family. Monomer.

It is found in the cytoplasm. It catalyses the reaction tRNA(Gln) + L-glutamine + ATP = L-glutaminyl-tRNA(Gln) + AMP + diphosphate. The sequence is that of Glutamine--tRNA ligase from Salmonella agona (strain SL483).